The following is a 100-amino-acid chain: Urease subunit gamma (100 aa).

The protein belongs to the urease gamma subunit family. As to quaternary structure, heterotrimer of UreA (gamma), UreB (beta) and UreC (alpha) subunits. Three heterotrimers associate to form the active enzyme.

Its subcellular location is the cytoplasm. It carries out the reaction urea + 2 H2O + H(+) = hydrogencarbonate + 2 NH4(+). Its pathway is nitrogen metabolism; urea degradation; CO(2) and NH(3) from urea (urease route): step 1/1. This is Urease subunit gamma from Edwardsiella ictaluri (strain 93-146).